We begin with the raw amino-acid sequence, 369 residues long: Serine/threonine-protein kinase srb10 (369 aa).

The 315-residue stretch at 5–319 folds into the Protein kinase domain; that stretch reads YKIIGFISSG…AKQALEHVFF (315 aa). ATP-binding positions include 11 to 19 and Lys-36; that span reads ISSGTYGKV. The Proton acceptor role is filled by Asp-140.

Belongs to the protein kinase superfamily. CMGC Ser/Thr protein kinase family. CDC2/CDKX subfamily. As to quaternary structure, component of the Cdk8 module of the Mediator complex. The Cdk8 module is composed of srb8, srb9, srb10 and srb11. Interacts with med17 and med18.

The protein resides in the nucleus. The enzyme catalyses L-seryl-[protein] + ATP = O-phospho-L-seryl-[protein] + ADP + H(+). It catalyses the reaction L-threonyl-[protein] + ATP = O-phospho-L-threonyl-[protein] + ADP + H(+). It carries out the reaction [DNA-directed RNA polymerase] + ATP = phospho-[DNA-directed RNA polymerase] + ADP + H(+). Functionally, catalytic component of the Cdk8 module/Srb8-11 module which is a regulatory module of the Mediator complex that regulates basal RNA polymerase II transcription. The Cdk8 module may sterically hinder the interaction between Mediator and RNA polymerase II leading to transcriptional repression of a subset of genes regulated by Mediator. The polypeptide is Serine/threonine-protein kinase srb10 (srb10) (Schizosaccharomyces pombe (strain 972 / ATCC 24843) (Fission yeast)).